The primary structure comprises 237 residues: Phosphoribosylaminoimidazole-succinocarboxamide synthase (237 aa).

Belongs to the SAICAR synthetase family.

The enzyme catalyses 5-amino-1-(5-phospho-D-ribosyl)imidazole-4-carboxylate + L-aspartate + ATP = (2S)-2-[5-amino-1-(5-phospho-beta-D-ribosyl)imidazole-4-carboxamido]succinate + ADP + phosphate + 2 H(+). Its pathway is purine metabolism; IMP biosynthesis via de novo pathway; 5-amino-1-(5-phospho-D-ribosyl)imidazole-4-carboxamide from 5-amino-1-(5-phospho-D-ribosyl)imidazole-4-carboxylate: step 1/2. The chain is Phosphoribosylaminoimidazole-succinocarboxamide synthase from Proteus mirabilis (strain HI4320).